The primary structure comprises 358 residues: C-X-C chemokine receptor type 4-A (358 aa).

Positions Met-1–Phe-25 are important for chemokine binding and signaling. At Met-1–Phe-44 the chain is on the extracellular side. Asn-16 and Asn-20 each carry an N-linked (GlcNAc...) asparagine glycan. 2 disulfide bridges follow: Cys-32–Cys-281 and Cys-113–Cys-190. Residues Leu-45 to Met-67 traverse the membrane as a helical segment. The Cytoplasmic portion of the chain corresponds to Gly-68–Arg-81. Residues Leu-82–Ala-103 form a helical membrane-spanning segment. The segment at Trp-98–Asp-101 is chemokine binding. The Extracellular portion of the chain corresponds to Ile-104–Lys-114. Residues Ala-115–Ile-134 traverse the membrane as a helical segment. Residues His-117–Thr-121 form a chemokine binding region. Residues Ser-135–Lys-158 lie on the Cytoplasmic side of the membrane. An involved in dimerization; when bound to chemokine region spans residues Tyr-139–Ser-151. A helical transmembrane segment spans residues Val-159–Phe-178. Residues Ala-179–Trp-202 are Extracellular-facing. Positions Cys-190–Tyr-194 are chemokine binding, important for signaling. The chain crosses the membrane as a helical span at residues Thr-203 to Leu-223. Over Ile-224–Thr-248 the chain is Cytoplasmic. The chain crosses the membrane as a helical span at residues Val-249–Thr-268. Over Asp-269–Met-289 the chain is Extracellular. A helical membrane pass occupies residues Ala-290–Tyr-309. Residues Ala-310–Ser-358 are Cytoplasmic-facing. The interval Lys-338–Ser-358 is disordered. A compositionally biased stretch (low complexity) spans Ser-344–Ser-358.

This sequence belongs to the G-protein coupled receptor 1 family. In terms of assembly, monomer. Can form dimers. Sulfation is required for efficient binding of cxcl12/sdf-1alpha and promotes its dimerization. In terms of processing, O- and N-glycosylated. In terms of tissue distribution, highly expressed in the embryonic nervous system including forebrain, hindbrain and sensory organs (including eye), and in neural crest cells. Also expressed in the dorsal lateral plate, the first site of definitive hematopoiesis in the embryo. Appears in migrating presumptive primordial germ cells (pPGCs) from stage 24. Expressed in the epidermis at stage 40. In the adult, highly expressed in the spleen with lower levels of expression in the liver and very low levels in kidney, heart, skin and brain.

It localises to the cell membrane. Its subcellular location is the cytoplasm. It is found in the nucleus. The protein localises to the early endosome. The protein resides in the late endosome. It localises to the lysosome. In terms of biological role, receptor for the C-X-C chemokine cxcl12/sdf-1. Transduces a signal by increasing the intracellular level of calcium ions. Signaling with cxcl12/sdf-1 mediates the directional movement of mesodermal cells during gastrulation. May play a role in the migration of embryonic presumptive primordial germ cells (pPGCs). May also be involved in regulating the migration of hematopoietic stem cells into the larval liver. This chain is C-X-C chemokine receptor type 4-A (cxcr4-a), found in Xenopus laevis (African clawed frog).